The sequence spans 263 residues: Syntaxin pep12 (263 aa).

The interval Arg-140–Lys-159 is disordered. Residues Val-142–Lys-159 are compositionally biased toward polar residues. Phosphoserine is present on residues Ser-148 and Ser-163. The t-SNARE coiled-coil homology domain occupies Gln-169–Ala-231.

Belongs to the syntaxin family.

The protein resides in the endoplasmic reticulum. Has a role in vesicle-mediated transport but not with protein transport from Golgi to vesicle. The sequence is that of Syntaxin pep12 (pep12) from Schizosaccharomyces pombe (strain 972 / ATCC 24843) (Fission yeast).